The chain runs to 183 residues: Photosystem II extrinsic protein V (183 aa).

The N-terminal stretch at 1–31 (MTFGHCRRASTLRSAFVLGLCGLLLAGCSGA) is a signal peptide. The heme c site is built by Cys84, Cys87, His88, and Cys138.

This sequence belongs to the cytochrome c family. PsbV subfamily. PSII is composed of 1 copy each of membrane proteins PsbA, PsbB, PsbC, PsbD, PsbE, PsbF, PsbH, PsbI, PsbJ, PsbK, PsbL, PsbM, PsbT, PsbX, Psb30/Ycf12, peripheral proteins PsbO, CyanoQ (PsbQ), PsbU, PsbV and a large number of cofactors. It forms dimeric complexes. It depends on heme c as a cofactor.

Its subcellular location is the cell inner membrane. Its function is as follows. Probably one of the extrinsic, lumenal subunits of photosystem II (PSII). PSII is a light-driven water plastoquinone oxidoreductase, using light energy to abstract electrons from H(2)O, generating a proton gradient subsequently used for ATP formation. The extrinsic proteins stabilize the structure of photosystem II oxygen-evolving complex (OEC), the ion environment of oxygen evolution and protect the OEC against heat-induced inactivation. Low-potential cytochrome c that plays a role in the OEC of PSII. The chain is Photosystem II extrinsic protein V (psbV1) from Gloeobacter violaceus (strain ATCC 29082 / PCC 7421).